The chain runs to 334 residues: Probable N5-carboxyaminoimidazole ribonucleotide mutase (334 aa).

Substrate is bound by residues S11, D14, and R41.

Belongs to the AIR carboxylase family. Class I subfamily.

It carries out the reaction 5-carboxyamino-1-(5-phospho-D-ribosyl)imidazole + H(+) = 5-amino-1-(5-phospho-D-ribosyl)imidazole-4-carboxylate. It functions in the pathway purine metabolism; IMP biosynthesis via de novo pathway; 5-amino-1-(5-phospho-D-ribosyl)imidazole-4-carboxylate from 5-amino-1-(5-phospho-D-ribosyl)imidazole (N5-CAIR route): step 2/2. In terms of biological role, catalyzes the conversion of N5-carboxyaminoimidazole ribonucleotide (N5-CAIR) to 4-carboxy-5-aminoimidazole ribonucleotide (CAIR). The protein is Probable N5-carboxyaminoimidazole ribonucleotide mutase of Methanothermobacter thermautotrophicus (strain ATCC 29096 / DSM 1053 / JCM 10044 / NBRC 100330 / Delta H) (Methanobacterium thermoautotrophicum).